The primary structure comprises 64 residues: Large ribosomal subunit protein uL30 (64 aa).

Belongs to the universal ribosomal protein uL30 family. As to quaternary structure, part of the 50S ribosomal subunit.

In Beijerinckia indica subsp. indica (strain ATCC 9039 / DSM 1715 / NCIMB 8712), this protein is Large ribosomal subunit protein uL30.